A 279-amino-acid chain; its full sequence is Putative cysteine-rich repeat secretory protein 22 (279 aa).

Positions 1-31 (MSSSSASKLLGSVLVFAMISVQIVFIHCVMS) are cleaved as a signal peptide. 2 consecutive Gnk2-homologous domains span residues 44–146 (YLHH…PINS) and 152–276 (YEYN…LYRF).

Belongs to the cysteine-rich repeat secretory protein family.

It is found in the secreted. In Arabidopsis thaliana (Mouse-ear cress), this protein is Putative cysteine-rich repeat secretory protein 22 (CRRSP22).